Here is a 288-residue protein sequence, read N- to C-terminus: Formamidopyrimidine-DNA glycosylase (288 aa).

Catalysis depends on Pro2, which acts as the Schiff-base intermediate with DNA. Glu3 functions as the Proton donor in the catalytic mechanism. Lys59 acts as the Proton donor; for beta-elimination activity in catalysis. Residues His93, Arg112, and Lys168 each contribute to the DNA site. Residues 254-288 form an FPG-type zinc finger; it reads NVYGRGGEPCKRCGAPIKRVVVGGRSTHYCATCQR. The Proton donor; for delta-elimination activity role is filled by Arg278.

Belongs to the FPG family. In terms of assembly, monomer. Requires Zn(2+) as cofactor.

The enzyme catalyses Hydrolysis of DNA containing ring-opened 7-methylguanine residues, releasing 2,6-diamino-4-hydroxy-5-(N-methyl)formamidopyrimidine.. The catalysed reaction is 2'-deoxyribonucleotide-(2'-deoxyribose 5'-phosphate)-2'-deoxyribonucleotide-DNA = a 3'-end 2'-deoxyribonucleotide-(2,3-dehydro-2,3-deoxyribose 5'-phosphate)-DNA + a 5'-end 5'-phospho-2'-deoxyribonucleoside-DNA + H(+). Its function is as follows. Involved in base excision repair of DNA damaged by oxidation or by mutagenic agents. Acts as a DNA glycosylase that recognizes and removes damaged bases. Has a preference for oxidized purines, such as 7,8-dihydro-8-oxoguanine (8-oxoG). Has AP (apurinic/apyrimidinic) lyase activity and introduces nicks in the DNA strand. Cleaves the DNA backbone by beta-delta elimination to generate a single-strand break at the site of the removed base with both 3'- and 5'-phosphates. This Corynebacterium jeikeium (strain K411) protein is Formamidopyrimidine-DNA glycosylase.